We begin with the raw amino-acid sequence, 286 residues long: tRNA pseudouridine synthase A (286 aa).

D60 (nucleophile) is an active-site residue. Position 132 (Y132) interacts with substrate.

Belongs to the tRNA pseudouridine synthase TruA family. Homodimer.

The catalysed reaction is uridine(38/39/40) in tRNA = pseudouridine(38/39/40) in tRNA. Formation of pseudouridine at positions 38, 39 and 40 in the anticodon stem and loop of transfer RNAs. This Mycobacterium leprae (strain TN) protein is tRNA pseudouridine synthase A.